The sequence spans 171 residues: ATP synthase subunit b (171 aa).

A helical membrane pass occupies residues valine 19–isoleucine 39.

This sequence belongs to the ATPase B chain family. As to quaternary structure, F-type ATPases have 2 components, F(1) - the catalytic core - and F(0) - the membrane proton channel. F(1) has five subunits: alpha(3), beta(3), gamma(1), delta(1), epsilon(1). F(0) has three main subunits: a(1), b(2) and c(10-14). The alpha and beta chains form an alternating ring which encloses part of the gamma chain. F(1) is attached to F(0) by a central stalk formed by the gamma and epsilon chains, while a peripheral stalk is formed by the delta and b chains.

It is found in the cell inner membrane. Its function is as follows. F(1)F(0) ATP synthase produces ATP from ADP in the presence of a proton or sodium gradient. F-type ATPases consist of two structural domains, F(1) containing the extramembraneous catalytic core and F(0) containing the membrane proton channel, linked together by a central stalk and a peripheral stalk. During catalysis, ATP synthesis in the catalytic domain of F(1) is coupled via a rotary mechanism of the central stalk subunits to proton translocation. In terms of biological role, component of the F(0) channel, it forms part of the peripheral stalk, linking F(1) to F(0). This is ATP synthase subunit b from Caulobacter sp. (strain K31).